Here is a 72-residue protein sequence, read N- to C-terminus: Large ribosomal subunit protein uL29 (72 aa).

Belongs to the universal ribosomal protein uL29 family.

The protein is Large ribosomal subunit protein uL29 of Rhodopirellula baltica (strain DSM 10527 / NCIMB 13988 / SH1).